Consider the following 344-residue polypeptide: Oxygen sensor histidine kinase NreB (344 aa).

The [4Fe-4S] cluster site is built by Cys-58, Cys-61, Cys-73, and Cys-76. Positions 152-344 (RISRELHDSV…GTNVTLNIPI (193 aa)) constitute a Histidine kinase domain. His-158 bears the Phosphohistidine; by autocatalysis mark.

[4Fe-4S] cluster is required as a cofactor. Autophosphorylated.

It localises to the cytoplasm. The catalysed reaction is ATP + protein L-histidine = ADP + protein N-phospho-L-histidine.. Member of the two-component regulatory system NreB/NreC involved in the control of dissimilatory nitrate/nitrite reduction in response to oxygen. NreB functions as a direct oxygen sensor histidine kinase which is autophosphorylated, in the absence of oxygen, probably at the conserved histidine residue, and transfers its phosphate group probably to a conserved aspartate residue of NreC. NreB/NreC activates the expression of the nitrate (narGHJI) and nitrite (nir) reductase operons, as well as the putative nitrate transporter gene narT. The chain is Oxygen sensor histidine kinase NreB (nreB) from Staphylococcus aureus (strain JH1).